A 290-amino-acid polypeptide reads, in one-letter code: Pyridoxal kinase PdxY (290 aa).

Substrate-binding positions include serine 12 and 47–48; that span reads TQ. Residues aspartate 114, glutamate 151, lysine 184, and 211-214 contribute to the ATP site; that span reads RPLL. Aspartate 225 is a binding site for substrate.

Belongs to the pyridoxine kinase family. PdxY subfamily. As to quaternary structure, homodimer. The cofactor is Mg(2+).

It carries out the reaction pyridoxal + ATP = pyridoxal 5'-phosphate + ADP + H(+). The protein operates within cofactor metabolism; pyridoxal 5'-phosphate salvage; pyridoxal 5'-phosphate from pyridoxal: step 1/1. Functionally, pyridoxal kinase involved in the salvage pathway of pyridoxal 5'-phosphate (PLP). Catalyzes the phosphorylation of pyridoxal to PLP. The polypeptide is Pyridoxal kinase PdxY (Pseudomonas fluorescens (strain SBW25)).